Here is a 137-residue protein sequence, read N- to C-terminus: Large ribosomal subunit protein uL16 (137 aa).

Belongs to the universal ribosomal protein uL16 family. Part of the 50S ribosomal subunit.

In terms of biological role, binds 23S rRNA and is also seen to make contacts with the A and possibly P site tRNAs. This chain is Large ribosomal subunit protein uL16, found in Lactococcus lactis subsp. cremoris (strain SK11).